A 531-amino-acid chain; its full sequence is MGAMGAAEPLHSVLWVKRRRCAVSLEPARALLRWWRSPEPGPSAPGADARSVLVSEIIAVEEKDDCEKHASSGRWHKMENPFAFTVHRVKRVRHHRWKWARVTFWSADEQLCHLWLQTLRGLLESLTSRPKHLLVFINPFGGKGQGKRIYEKTVAPLFTLASITTEIIITEHANQAKETLYEINTDSYDGIVCVGGDGMFSEVLHGVIGRTQQSAGIDPNHPRAVLVPSTLRIGIIPAGSTDCVCYSTVGTNDAETSALHIIIGDSLAIDVSSVHYHNTLLRYSVSLLGYGFYGDLIKDSEKKRWMGLVRYDFSGLKTFLSHQYYEGTLSFLPAQHTVGSPRDNKPCRAGCFVCRQSKQQLEEEEKKALYGLENAEEMEEWQVTCGKFLAINATNMSCACPRSPGGLSPFAHLGDGSSDLILIRKCSRFNFLRFLIRHTNQEDQFDFTFVEVYRVKKFHFTSKHVEDEDNDSKEQEKQKFGKICKDRPSCTCSASRSSWNCDGEVMHSPAIEVRVHCQLVRLFARGIEEES.

An essential for enzyme activity region spans residues 1 to 115 (MGAMGAAEPL…SADEQLCHLW (115 aa)). The segment at 1 to 125 (MGAMGAAEPL…LQTLRGLLES (125 aa)) is required for binding to sulfatide and phosphoinositides. Residues 128–278 (SRPKHLLVFI…IDVSSVHYHN (151 aa)) form the DAGKc domain. Residues 138 to 140 (NPF) and 170 to 174 (TEHAN) contribute to the ATP site. 195 to 198 (GGDG) contacts substrate. Residue Asp-197 is the Proton donor/acceptor of the active site. Residues Glu-202, 239–241 (GST), Arg-304, and Arg-310 each bind ATP. Residues Ser-340 and Ser-408 each carry the phosphoserine modification. 502 to 504 (DGE) contacts ATP.

The cofactor is Ca(2+). Mg(2+) is required as a cofactor. High level expression in heart, brain, testis and pancreas; low expression in spleen, liver and lung; not detected in skeletal muscle.

Its subcellular location is the cytoplasm. The protein localises to the cell membrane. The catalysed reaction is an N-acylsphing-4-enine + ATP = an N-acylsphing-4-enine 1-phosphate + ADP + H(+). The enzyme catalyses N-(hexanoyl)sphing-4-enine + ATP = N-hexanoylsphing-4-enine 1-phosphate + ADP + H(+). It catalyses the reaction N-(acetyl)-sphing-4-enine + ATP = N-(acetyl)-sphing-4-enine-1-phosphate + ADP + H(+). It carries out the reaction N-hexadecanoylsphing-4-enine + ATP = N-(hexadecanoyl)-sphing-4-enine-1-phosphate + ADP + H(+). The catalysed reaction is N-hexanoyl-(4R)-hydroxysphinganine + ATP = N-hexanoyl-(4R)-hydroxysphinganine-1-phosphate + ADP + H(+). Functionally, catalyzes specifically the phosphorylation of ceramide to form ceramide 1-phosphate. Acts efficiently on natural and analog ceramides (C6, C8, C16 ceramides, and C8-dihydroceramide), to a lesser extent on C2-ceramide and C6-dihydroceramide, but not on other lipids, such as various sphingosines. Shows a greater preference for D-erythro isomer of ceramides. Binds phosphoinositides. The chain is Ceramide kinase (Cerk) from Mus musculus (Mouse).